We begin with the raw amino-acid sequence, 400 residues long: Formate-dependent phosphoribosylglycinamide formyltransferase (400 aa).

Residues 22–23 and glutamate 82 each bind N(1)-(5-phospho-beta-D-ribosyl)glycinamide; that span reads EL. ATP-binding positions include arginine 115, lysine 156, 161–166, 196–199, and glutamate 204; these read SSGKGQ and EGFI. The region spanning 120–309 is the ATP-grasp domain; the sequence is RLAAETLCLP…EFALHARAIL (190 aa). The Mg(2+) site is built by glutamate 268 and glutamate 280. Residues aspartate 287, lysine 361, and 368 to 369 contribute to the N(1)-(5-phospho-beta-D-ribosyl)glycinamide site; that span reads RR.

It belongs to the PurK/PurT family. Homodimer.

The enzyme catalyses N(1)-(5-phospho-beta-D-ribosyl)glycinamide + formate + ATP = N(2)-formyl-N(1)-(5-phospho-beta-D-ribosyl)glycinamide + ADP + phosphate + H(+). It participates in purine metabolism; IMP biosynthesis via de novo pathway; N(2)-formyl-N(1)-(5-phospho-D-ribosyl)glycinamide from N(1)-(5-phospho-D-ribosyl)glycinamide (formate route): step 1/1. Functionally, involved in the de novo purine biosynthesis. Catalyzes the transfer of formate to 5-phospho-ribosyl-glycinamide (GAR), producing 5-phospho-ribosyl-N-formylglycinamide (FGAR). Formate is provided by PurU via hydrolysis of 10-formyl-tetrahydrofolate. This Xanthomonas euvesicatoria pv. vesicatoria (strain 85-10) (Xanthomonas campestris pv. vesicatoria) protein is Formate-dependent phosphoribosylglycinamide formyltransferase.